Consider the following 661-residue polypeptide: Hemocyanin C chain (661 aa).

Cys3 and Cys557 are oxidised to a cystine. Residues His200, His204, His230, His350, His354, and His390 each contribute to the Cu cation site. An N-linked (GlcNAc...) asparagine glycan is attached at Asn476.

The protein belongs to the tyrosinase family. Hemocyanin subfamily. In terms of assembly, hexamer of a number of different chains, of which A, B, and C have been identified. As to expression, hemolymph.

The protein localises to the secreted. The protein resides in the extracellular space. Functionally, hemocyanins are copper-containing oxygen carriers occurring freely dissolved in the hemolymph of many mollusks and arthropods. The protein is Hemocyanin C chain of Panulirus interruptus (California spiny lobster).